The following is a 125-amino-acid chain: Small ribosomal subunit protein uS13 (125 aa).

Residues 92 to 125 form a disordered region; the sequence is RRSLPARGQNTQTNARTRKGRRKTVAGKKKAVKK. The segment covering 107 to 125 has biased composition (basic residues); the sequence is RTRKGRRKTVAGKKKAVKK.

Belongs to the universal ribosomal protein uS13 family. Part of the 30S ribosomal subunit. Forms a loose heterodimer with protein S19. Forms two bridges to the 50S subunit in the 70S ribosome.

Located at the top of the head of the 30S subunit, it contacts several helices of the 16S rRNA. In the 70S ribosome it contacts the 23S rRNA (bridge B1a) and protein L5 of the 50S subunit (bridge B1b), connecting the 2 subunits; these bridges are implicated in subunit movement. Contacts the tRNAs in the A and P-sites. This chain is Small ribosomal subunit protein uS13, found in Chlorobium phaeobacteroides (strain BS1).